The chain runs to 302 residues: Aspartate carbamoyltransferase catalytic subunit (302 aa).

Carbamoyl phosphate contacts are provided by arginine 53 and threonine 54. Residue lysine 82 coordinates L-aspartate. Carbamoyl phosphate is bound by residues arginine 103, histidine 131, and glutamine 134. The L-aspartate site is built by arginine 164 and arginine 223. Positions 260 and 261 each coordinate carbamoyl phosphate.

This sequence belongs to the aspartate/ornithine carbamoyltransferase superfamily. ATCase family. Heterooligomer of catalytic and regulatory chains.

It catalyses the reaction carbamoyl phosphate + L-aspartate = N-carbamoyl-L-aspartate + phosphate + H(+). It participates in pyrimidine metabolism; UMP biosynthesis via de novo pathway; (S)-dihydroorotate from bicarbonate: step 2/3. Functionally, catalyzes the condensation of carbamoyl phosphate and aspartate to form carbamoyl aspartate and inorganic phosphate, the committed step in the de novo pyrimidine nucleotide biosynthesis pathway. The protein is Aspartate carbamoyltransferase catalytic subunit of Methanococcus maripaludis (strain C7 / ATCC BAA-1331).